The sequence spans 122 residues: Neutral phospholipase A2 agkistrodotoxin (122 aa).

Disulfide bonds link cysteine 26-cysteine 115, cysteine 28-cysteine 44, cysteine 43-cysteine 95, cysteine 49-cysteine 122, cysteine 50-cysteine 88, cysteine 57-cysteine 81, and cysteine 75-cysteine 86. Tyrosine 27, glycine 29, and glycine 31 together coordinate Ca(2+). The active site involves histidine 47. Position 48 (aspartate 48) interacts with Ca(2+). Residue aspartate 89 is part of the active site.

Requires Ca(2+) as cofactor. In terms of tissue distribution, expressed by the venom gland.

Its subcellular location is the secreted. The enzyme catalyses a 1,2-diacyl-sn-glycero-3-phosphocholine + H2O = a 1-acyl-sn-glycero-3-phosphocholine + a fatty acid + H(+). Its function is as follows. Snake venom phospholipase A2 (PLA2) that inhibits neuromuscular transmission by blocking acetylcholine release from the nerve termini. PLA2 catalyzes the calcium-dependent hydrolysis of the 2-acyl groups in 3-sn-phosphoglycerides. The chain is Neutral phospholipase A2 agkistrodotoxin from Gloydius halys (Chinese water mocassin).